We begin with the raw amino-acid sequence, 230 residues long: Large ribosomal subunit protein uL1 (230 aa).

It belongs to the universal ribosomal protein uL1 family. Part of the 50S ribosomal subunit.

In terms of biological role, binds directly to 23S rRNA. The L1 stalk is quite mobile in the ribosome, and is involved in E site tRNA release. Functionally, protein L1 is also a translational repressor protein, it controls the translation of the L11 operon by binding to its mRNA. This chain is Large ribosomal subunit protein uL1, found in Bradyrhizobium sp. (strain ORS 278).